We begin with the raw amino-acid sequence, 437 residues long: UDP-N-acetylmuramate--L-alanine ligase (437 aa).

ATP is bound at residue 108–114; sequence GAHGKTS.

The protein belongs to the MurCDEF family.

The protein resides in the cytoplasm. The catalysed reaction is UDP-N-acetyl-alpha-D-muramate + L-alanine + ATP = UDP-N-acetyl-alpha-D-muramoyl-L-alanine + ADP + phosphate + H(+). It participates in cell wall biogenesis; peptidoglycan biosynthesis. Its function is as follows. Cell wall formation. This chain is UDP-N-acetylmuramate--L-alanine ligase, found in Staphylococcus carnosus (strain TM300).